Here is a 174-residue protein sequence, read N- to C-terminus: UPF0316 protein LMHCC_0787 (174 aa).

The next 3 membrane-spanning stretches (helical) occupy residues 4-24 (GIFI…IYTV), 36-56 (LAAL…SLVL), and 62-82 (IANV…GMKI).

This sequence belongs to the UPF0316 family.

The protein localises to the cell membrane. This chain is UPF0316 protein LMHCC_0787, found in Listeria monocytogenes serotype 4a (strain HCC23).